The following is a 268-amino-acid chain: uncharacterized protein (268 aa).

This is an uncharacterized protein from Metamycoplasma hominis (strain ATCC 23114 / DSM 25592 / NBRC 14850 / NCTC 10111 / PG21) (Mycoplasma hominis).